The chain runs to 981 residues: MLRRPAPALAPAARLLLAGLLCGGGVWAARVNKHKPWLEPTYHGIVTENDNTVLLDPPLIALDKDAPLRFAESFEVTVTKEGEICGFKIHGQNVPFDAVVVDKSTGEGVIRSKEKLDCELQKDYSFTIQAYDCGKGPDGTNVKKSHKATVHIQVNDVNEYAPVFKEKSYKATVIEGKQYDSILRVEAVDADCSPQFSQICSYEIITPDVPFTVDKDGYIKNTEKLNYGKEHQYKLTVTAYDCGKKRATEDVLVKISIKPTCTPGWQGWNNRIEYEPGTGALAVFPNIHLETCDEPVASVQATVELETSHIGKGCDRDTYSEKSLHRLCGAAAGTAELLPSPSGSLNWTMGLPTDNGHDSDQVFEFNGTQAVRIPDGVVSVSPKEPFTISVWMRHGPFGRKKETILCSSDKTDMNRHHYSLYVHGCRLIFLFRQDPSEEKKYRPAEFHWKLNQVCDEEWHHYVLNVEFPSVTLYVDGTSHEPFSVTEDYPLHPSKIETQLVVGACWQEFSGVENDNETEPVTVASAGGDLHMTQFFRGNLAGLTLRSGKLADKKVIDCLYTCKEGLDLQVLEDSGRGVQIQAHPSQLVLTLEGEDLGELDKAMQHISYLNSRQFPTPGIRRLKITSTIKCFNEATCISVPPVDGYVMVLQPEEPKISLSGVHHFARAASEFESSEGVFLFPELRIISTITREVEPEGDGAEDPTVQESLVSEEIVHDLDTCEVTVEGEELNHEQESLEVDMARLQQKGIEVSSSELGMTFTGVDTMASYEEVLHLLRYRNWHARSLLDRKFKLICSELNGRYISNEFKVEVNVIHTANPMEHANHMAAQPQFVHPEHRSFVDLSGHNLANPHPFAVVPSTATVVIVVCVSFLVFMIILGVFRIRAAHRRTMRDQDTGKENEMDWDDSALTITVNPMETYEDQHSSEEEEEEEEEEESEDGEEEDDITSAESESSEEEEGEQGDPQNATRQQQLEWDDSTLSY.

The N-terminal stretch at 1-28 (MLRRPAPALAPAARLLLAGLLCGGGVWA) is a signal peptide. At 29-859 (ARVNKHKPWL…PHPFAVVPST (831 aa)) the chain is on the extracellular side. Cadherin domains follow at residues 38-164 (LEPT…APVF) and 165-265 (KEKS…TPGW). Asn346, Asn366, and Asn515 each carry an N-linked (GlcNAc...) asparagine glycan. Residues 860 to 880 (ATVVIVVCVSFLVFMIILGVF) traverse the membrane as a helical segment. The Cytoplasmic portion of the chain corresponds to 881-981 (RIRAAHRRTM…LEWDDSTLSY (101 aa)). The tract at residues 915-981 (METYEDQHSS…LEWDDSTLSY (67 aa)) is disordered. Over residues 925–960 (EEEEEEEEEEESEDGEEEDDITSAESESSEEEEGEQ) the composition is skewed to acidic residues. Positions 962 to 981 (DPQNATRQQQLEWDDSTLSY) are enriched in polar residues.

The protein belongs to the calsyntenin family. Directly interacts with APBA2. Forms a tripartite complex with APBA2 and APP. Interacts with KLC1. In terms of assembly, interacts with APBB1; this interaction stabilizes AlcICD metabolism. As to quaternary structure, interacts with PSEN1. Proteolytically processed under normal cellular conditions. A primary zeta-cleavage generates a large extracellular (soluble) N-terminal domain (sAlc) and a short C-terminal transmembrane fragment (CTF1). A secondary cleavage catalyzed by presenilin gamma-secretase within the transmembrane domain releases the beta-Alc-alpha chain in the extracellular milieu and produces an intracellular fragment (AlcICD). This processing is strongly suppressed in the tripartite complex formed with APBA2 and APP, which seems to prevent the association with PSEN1. As to expression, expressed in the brain and, a lower level, in the heart, skeletal muscle, kidney and placenta. Accumulates in dystrophic neurites around the amyloid core of Alzheimer disease senile plaques (at protein level).

It is found in the postsynaptic cell membrane. Its subcellular location is the endoplasmic reticulum membrane. The protein resides in the golgi apparatus membrane. It localises to the cell projection. The protein localises to the neuron projection. It is found in the nucleus. Postsynaptic adhesion molecule that binds to presynaptic neurexins to mediate both excitatory and inhibitory synapse formation. Promotes synapse development by acting as a cell adhesion molecule at the postsynaptic membrane, which associates with neurexin-alpha at the presynaptic membrane. Also functions as a cargo in axonal anterograde transport by acting as a molecular adapter that promotes KLC1 association with vesicles. Complex formation with APBA2 and APP, stabilizes APP metabolism and enhances APBA2-mediated suppression of beta-APP40 secretion, due to the retardation of intracellular APP maturation. In terms of biological role, as intracellular fragment AlcICD, suppresses APBB1-dependent transactivation stimulated by APP C-terminal intracellular fragment (AICD), most probably by competing with AICD for APBB1-binding. Its function is as follows. In complex with APBA2 and C99, a C-terminal APP fragment, abolishes C99 interaction with PSEN1 and thus APP C99 cleavage by gamma-secretase, most probably through stabilization of the direct interaction between APBA2 and APP. This is Calsyntenin-1 from Homo sapiens (Human).